Reading from the N-terminus, the 525-residue chain is GMP synthase [glutamine-hydrolyzing] (525 aa).

The 199-residue stretch at 9–207 folds into the Glutamine amidotransferase type-1 domain; that stretch reads RILILDFGSQ…VLGICGCEAL (199 aa). The Nucleophile role is filled by cysteine 86. Active-site residues include histidine 181 and glutamate 183. A GMPS ATP-PPase domain is found at 208-400; that stretch reads WTSATIIEDA…LGLPYDMLYR (193 aa). ATP is bound at residue 235 to 241; sequence SGGVDSS.

In terms of assembly, homodimer.

The catalysed reaction is XMP + L-glutamine + ATP + H2O = GMP + L-glutamate + AMP + diphosphate + 2 H(+). Its pathway is purine metabolism; GMP biosynthesis; GMP from XMP (L-Gln route): step 1/1. In terms of biological role, catalyzes the synthesis of GMP from XMP. The chain is GMP synthase [glutamine-hydrolyzing] from Yersinia pestis bv. Antiqua (strain Antiqua).